The primary structure comprises 299 residues: Nucleotide-binding protein RER_30260 (299 aa).

Residue 19-26 coordinates ATP; the sequence is GLSGAGLS. 70–73 is a binding site for GTP; sequence DVRS.

This sequence belongs to the RapZ-like family.

Functionally, displays ATPase and GTPase activities. The polypeptide is Nucleotide-binding protein RER_30260 (Rhodococcus erythropolis (strain PR4 / NBRC 100887)).